A 160-amino-acid polypeptide reads, in one-letter code: 2-C-methyl-D-erythritol 2,4-cyclodiphosphate synthase (160 aa).

Residues aspartate 11 and histidine 13 each contribute to the a divalent metal cation site. Residues 11-13 and 37-38 each bind 4-CDP-2-C-methyl-D-erythritol 2-phosphate; these read DVH and HS. Histidine 45 lines the a divalent metal cation pocket. 4-CDP-2-C-methyl-D-erythritol 2-phosphate contacts are provided by residues 59 to 61 and arginine 145; that span reads DIG.

It belongs to the IspF family. In terms of assembly, homotrimer. A divalent metal cation serves as cofactor.

The catalysed reaction is 4-CDP-2-C-methyl-D-erythritol 2-phosphate = 2-C-methyl-D-erythritol 2,4-cyclic diphosphate + CMP. It participates in isoprenoid biosynthesis; isopentenyl diphosphate biosynthesis via DXP pathway; isopentenyl diphosphate from 1-deoxy-D-xylulose 5-phosphate: step 4/6. Involved in the biosynthesis of isopentenyl diphosphate (IPP) and dimethylallyl diphosphate (DMAPP), two major building blocks of isoprenoid compounds. Catalyzes the conversion of 4-diphosphocytidyl-2-C-methyl-D-erythritol 2-phosphate (CDP-ME2P) to 2-C-methyl-D-erythritol 2,4-cyclodiphosphate (ME-CPP) with a corresponding release of cytidine 5-monophosphate (CMP). This chain is 2-C-methyl-D-erythritol 2,4-cyclodiphosphate synthase, found in Neisseria meningitidis serogroup B (strain ATCC BAA-335 / MC58).